Consider the following 114-residue polypeptide: INGDAKGTVFFEQETSEAPVKVTGEGLGLAKGLHGFHVHEFGDNTNGCMSSGPHFNPRNKEHGAPTDENRHLGDLGNIQAAGDSPTAVSITDSKITLFGADSIIGRTVVVHADA.

Positions 37, 39, and 54 each coordinate Cu cation. Residues 48-68 (CMSSGPHFNPRNKEHGAPTDE) are disordered. Residues histidine 54, histidine 62, histidine 71, and aspartate 74 each contribute to the Zn(2+) site. The segment covering 58–68 (RNKEHGAPTDE) has biased composition (basic and acidic residues). Cu cation is bound at residue histidine 111.

Belongs to the Cu-Zn superoxide dismutase family. As to quaternary structure, homodimer. It depends on Cu cation as a cofactor. Zn(2+) is required as a cofactor.

It localises to the cytoplasm. The catalysed reaction is 2 superoxide + 2 H(+) = H2O2 + O2. Destroys radicals which are normally produced within the cells and which are toxic to biological systems. The sequence is that of Superoxide dismutase [Cu-Zn] from Drosophila miranda (Fruit fly).